A 763-amino-acid chain; its full sequence is Protein translocase subunit SecA 2 (763 aa).

ATP contacts are provided by residues glutamine 83, 101-105 (GEGKT), and aspartate 490.

Belongs to the SecA family. In terms of assembly, monomer and homodimer. Part of the essential Sec protein translocation apparatus which comprises SecA, SecYEG and auxiliary proteins SecDF. Other proteins may also be involved.

Its subcellular location is the cell membrane. It localises to the cytoplasm. It carries out the reaction ATP + H2O + cellular proteinSide 1 = ADP + phosphate + cellular proteinSide 2.. Functionally, part of the Sec protein translocase complex. Interacts with the SecYEG preprotein conducting channel. Has a central role in coupling the hydrolysis of ATP to the transfer of proteins into and across the cell membrane, serving as an ATP-driven molecular motor driving the stepwise translocation of polypeptide chains across the membrane. The chain is Protein translocase subunit SecA 2 from Corynebacterium glutamicum (strain R).